The chain runs to 446 residues: Phosphoglucosamine mutase (446 aa).

S101 (phosphoserine intermediate) is an active-site residue. Mg(2+) contacts are provided by S101, D240, D242, and D244. S101 bears the Phosphoserine mark.

This sequence belongs to the phosphohexose mutase family. Mg(2+) serves as cofactor. Post-translationally, activated by phosphorylation.

The catalysed reaction is alpha-D-glucosamine 1-phosphate = D-glucosamine 6-phosphate. Functionally, catalyzes the conversion of glucosamine-6-phosphate to glucosamine-1-phosphate. This Pseudomonas entomophila (strain L48) protein is Phosphoglucosamine mutase.